The primary structure comprises 179 residues: Large ribosomal subunit protein uL6 (179 aa).

This sequence belongs to the universal ribosomal protein uL6 family. As to quaternary structure, part of the 50S ribosomal subunit.

Its function is as follows. This protein binds to the 23S rRNA, and is important in its secondary structure. It is located near the subunit interface in the base of the L7/L12 stalk, and near the tRNA binding site of the peptidyltransferase center. This Prochlorococcus marinus (strain MIT 9515) protein is Large ribosomal subunit protein uL6.